The sequence spans 277 residues: Large ribosomal subunit protein uL2 (277 aa).

Residues 199–277 form a disordered region; sequence DHGNINDGKA…ILRSRHQRKS (79 aa).

Belongs to the universal ribosomal protein uL2 family. Part of the 50S ribosomal subunit. Forms a bridge to the 30S subunit in the 70S ribosome.

In terms of biological role, one of the primary rRNA binding proteins. Required for association of the 30S and 50S subunits to form the 70S ribosome, for tRNA binding and peptide bond formation. It has been suggested to have peptidyltransferase activity; this is somewhat controversial. Makes several contacts with the 16S rRNA in the 70S ribosome. The sequence is that of Large ribosomal subunit protein uL2 from Mesorhizobium japonicum (strain LMG 29417 / CECT 9101 / MAFF 303099) (Mesorhizobium loti (strain MAFF 303099)).